The following is a 357-amino-acid chain: GPI mannosyltransferase 2 (357 aa).

A run of 8 helical transmembrane segments spans residues 6 to 26 (TLIV…LVVP), 86 to 106 (AIAY…ALML), 128 to 148 (ILSP…FALL), 167 to 187 (VLGA…PFLF), 201 to 221 (GVSV…TQYL), 257 to 277 (YWTA…YLMY), 286 to 306 (LVPF…MWHV), and 334 to 354 (YVVR…GAYL).

It belongs to the PIGV family.

It is found in the endoplasmic reticulum membrane. Its pathway is glycolipid biosynthesis; glycosylphosphatidylinositol-anchor biosynthesis. Its function is as follows. Mannosyltransferase involved in glycosylphosphatidylinositol-anchor biosynthesis. Transfers the second mannose to the glycosylphosphatidylinositol during GPI precursor assembly. The sequence is that of GPI mannosyltransferase 2 (GPI18) from Yarrowia lipolytica (strain CLIB 122 / E 150) (Yeast).